Consider the following 1111-residue polypeptide: Lysylphosphatidylglycerol biosynthesis bifunctional protein LysX (1111 aa).

Residues 1–612 (MTLTSPPRTR…VLHHDGTAPD (612 aa)) are phosphatidylglycerol lysyltransferase. 7 helical membrane passes run 18-38 (VPAA…IASV), 60-80 (FPDT…ALAA), 84-104 (IAWW…VADL), 118-138 (VIGL…RPLF), 152-172 (GVLA…LELF), 209-229 (VNAL…IVLF), and 308-328 (AWLA…ASVG). Residues 613–1111 (MSGLRTDTAD…TLPFPLARPR (499 aa)) are lysine--tRNA ligase. The OB DNA-binding region spans 674-747 (VAGRVLRIRD…GTRSLLVRHW (74 aa)). Positions 1023 and 1030 each coordinate Mg(2+).

In the N-terminal section; belongs to the LPG synthetase family. It in the C-terminal section; belongs to the class-II aminoacyl-tRNA synthetase family. Mg(2+) is required as a cofactor.

It localises to the cell membrane. It catalyses the reaction tRNA(Lys) + L-lysine + ATP = L-lysyl-tRNA(Lys) + AMP + diphosphate. The catalysed reaction is L-lysyl-tRNA(Lys) + a 1,2-diacyl-sn-glycero-3-phospho-(1'-sn-glycerol) = a 1,2-diacyl-sn-glycero-3-phospho-1'-(3'-O-L-lysyl)-sn-glycerol + tRNA(Lys). Its function is as follows. Catalyzes the production of L-lysyl-tRNA(Lys)transfer and the transfer of a lysyl group from L-lysyl-tRNA(Lys) to membrane-bound phosphatidylglycerol (PG), which produces lysylphosphatidylglycerol (LPG), one of the components of the bacterial membrane with a positive net charge. LPG synthesis contributes to the resistance to cationic antimicrobial peptides (CAMPs) and likely protects M.tuberculosis against the CAMPs produced by competiting microorganisms (bacteriocins). In fact, the modification of anionic phosphatidylglycerol with positively charged L-lysine results in repulsion of the peptides. This Mycobacterium sp. (strain JLS) protein is Lysylphosphatidylglycerol biosynthesis bifunctional protein LysX (lysX).